Here is a 105-residue protein sequence, read N- to C-terminus: Large ribosomal subunit protein uL24 (105 aa).

The protein belongs to the universal ribosomal protein uL24 family. As to quaternary structure, part of the 50S ribosomal subunit.

One of two assembly initiator proteins, it binds directly to the 5'-end of the 23S rRNA, where it nucleates assembly of the 50S subunit. Its function is as follows. One of the proteins that surrounds the polypeptide exit tunnel on the outside of the subunit. In Aeromonas salmonicida (strain A449), this protein is Large ribosomal subunit protein uL24.